Consider the following 440-residue polypeptide: Serine hydroxymethyltransferase (440 aa).

(6S)-5,6,7,8-tetrahydrofolate contacts are provided by residues L119 and 123–125 (GHL). An N6-(pyridoxal phosphate)lysine modification is found at K228. Residue 370–372 (SPF) coordinates (6S)-5,6,7,8-tetrahydrofolate.

Belongs to the SHMT family. Homodimer. Requires pyridoxal 5'-phosphate as cofactor.

The protein resides in the cytoplasm. The catalysed reaction is (6R)-5,10-methylene-5,6,7,8-tetrahydrofolate + glycine + H2O = (6S)-5,6,7,8-tetrahydrofolate + L-serine. The protein operates within one-carbon metabolism; tetrahydrofolate interconversion. Its pathway is amino-acid biosynthesis; glycine biosynthesis; glycine from L-serine: step 1/1. Functionally, catalyzes the reversible interconversion of serine and glycine with tetrahydrofolate (THF) serving as the one-carbon carrier. This reaction serves as the major source of one-carbon groups required for the biosynthesis of purines, thymidylate, methionine, and other important biomolecules. Also exhibits THF-independent aldolase activity toward beta-hydroxyamino acids, producing glycine and aldehydes, via a retro-aldol mechanism. The chain is Serine hydroxymethyltransferase from Chloroherpeton thalassium (strain ATCC 35110 / GB-78).